The sequence spans 196 residues: GTP cyclohydrolase 1 (196 aa).

Zn(2+) contacts are provided by Cys86, His89, and Cys158.

Belongs to the GTP cyclohydrolase I family. Homomer.

The catalysed reaction is GTP + H2O = 7,8-dihydroneopterin 3'-triphosphate + formate + H(+). It participates in cofactor biosynthesis; 7,8-dihydroneopterin triphosphate biosynthesis; 7,8-dihydroneopterin triphosphate from GTP: step 1/1. This is GTP cyclohydrolase 1 from Clostridium botulinum (strain Kyoto / Type A2).